Reading from the N-terminus, the 404-residue chain is SL1278 acyltransferase Chp1 (404 aa).

At 1–42 (MKCPGVSDCVATVRHDNVFAIAAGLRWSAAVPPLHKGDAVTK) the chain is on the periplasmic side. A helical membrane pass occupies residues 43–63 (LLVGAIAGGMLACAAILGDGI). The Cytoplasmic segment spans residues 64–404 (ASADTALIVP…RGLLPKGKKH (341 aa)). Residues 104 to 325 (PTATRHVVSY…LRPIIDRAYQ (222 aa)) enclose the PE-PPE domain.

The protein belongs to the mycobacterial PPE family.

The protein localises to the cell inner membrane. It carries out the reaction 3 3'-(hydroxy)phthioceranyl-2'-palmitoyl(stearoyl)-2-O-sulfo-alpha,alpha-trehalose = 3,6,6'-tris-(hydroxy)phthioceranyl-2-palmitoyl(stearoyl)-2'-sulfo-alpha-alpha-trehalose + 2 2'-palmitoyl/stearoyl-2-O-sulfo-alpha,alpha-trehalose.. Its activity is regulated as follows. Activity is potentiated by the SL-1 transporter MmpL8. Inhibited by the lipase inhibitor tetrahydrolipstatin (THL). Its function is as follows. Involved in the final steps of the cell wall sulfolipid-1 (SL-1) biosynthesis. Catalyzes two successive acylations of the precursor 2-palmitoyl-3-(C43)-phthioceranyl-alpha, alpha'-D-trehalose-2'-sulfate (SL1278) to yield the tetraacylated sulfolipid SL-1. The polypeptide is SL1278 acyltransferase Chp1 (Mycobacterium tuberculosis (strain ATCC 25618 / H37Rv)).